Reading from the N-terminus, the 265-residue chain is Undecaprenyl-diphosphatase (265 aa).

8 consecutive transmembrane segments (helical) span residues Ile7–Ser27, Thr45–His65, Leu86–Ile106, Leu108–Ile128, Ile145–Phe165, Ile186–Ile206, Ile214–Cys234, and Thr245–Asn265.

Belongs to the UppP family.

It is found in the cell membrane. The enzyme catalyses di-trans,octa-cis-undecaprenyl diphosphate + H2O = di-trans,octa-cis-undecaprenyl phosphate + phosphate + H(+). In terms of biological role, catalyzes the dephosphorylation of undecaprenyl diphosphate (UPP). Confers resistance to bacitracin. In Buchnera aphidicola subsp. Acyrthosiphon pisum (strain Tuc7), this protein is Undecaprenyl-diphosphatase.